We begin with the raw amino-acid sequence, 459 residues long: Serine protease HTRA3 (459 aa).

Positions 1–23 (MQARALLPATLATLATLAVSVLA) are cleaved as a signal peptide. The IGFBP N-terminal domain occupies 27-90 (PAAPCPARCD…ECVRGVCRCR (64 aa)). 8 cysteine pairs are disulfide-bonded: cysteine 31–cysteine 54, cysteine 35–cysteine 56, cysteine 40–cysteine 57, cysteine 45–cysteine 60, cysteine 68–cysteine 82, cysteine 76–cysteine 87, cysteine 89–cysteine 107, and cysteine 96–cysteine 132. Residues 76–134 (CGDSLECVRGVCRCRWTHTVCGTDGHTYADVCALQAASRRALQISGTPVRQLQKGACPS) form the Kazal-like domain. Positions 181–346 (GSGFIMSEAG…AIPSDRITRF (166 aa)) are serine protease. Active-site charge relay system residues include histidine 197, aspartate 233, and serine 311. In terms of domain architecture, PDZ spans 365 to 450 (IRMRTITPSL…EVRRGNDDLL (86 aa)).

Belongs to the peptidase S1C family. In terms of assembly, homotrimer. Interacts with TGFB1; the interaction inhibits TGFB-mediated signaling. Interacts with BMP4; the interaction inhibits BMP4-mediated signaling. Interacts with TGFB2, GDF5 and MYH9. In terms of tissue distribution, expressed in the ovary, essentially in granulosa cells in a follicle-stage specific manner. Highest levels found in large luteinizing granulosa cells.

Its subcellular location is the secreted. In terms of biological role, serine protease that cleaves beta-casein/CSN2 as well as several extracellular matrix (ECM) proteoglycans such as decorin/DCN, biglycan/BGN and fibronectin/FN1. Inhibits signaling mediated by TGF-beta family proteins possibly indirectly by degradation of these ECM proteoglycans. May act as a tumor suppressor. Negatively regulates, in vitro, trophoblast invasion during placental development and may be involved in the development of the placenta in vivo. May also have a role in ovarian development, granulosa cell differentiation and luteinization. The sequence is that of Serine protease HTRA3 (Htra3) from Rattus norvegicus (Rat).